Consider the following 63-residue polypeptide: Small ribosomal subunit protein eS17 (63 aa).

The protein belongs to the eukaryotic ribosomal protein eS17 family.

The sequence is that of Small ribosomal subunit protein eS17 (rps17e) from Haloarcula marismortui (strain ATCC 43049 / DSM 3752 / JCM 8966 / VKM B-1809) (Halobacterium marismortui).